The primary structure comprises 132 residues: DNA-directed RNA polymerase subunit omega (132 aa).

It belongs to the RNA polymerase subunit omega family. As to quaternary structure, the RNAP catalytic core consists of 2 alpha, 1 beta, 1 beta' and 1 omega subunit. When a sigma factor is associated with the core the holoenzyme is formed, which can initiate transcription.

It carries out the reaction RNA(n) + a ribonucleoside 5'-triphosphate = RNA(n+1) + diphosphate. Functionally, promotes RNA polymerase assembly. Latches the N- and C-terminal regions of the beta' subunit thereby facilitating its interaction with the beta and alpha subunits. This chain is DNA-directed RNA polymerase subunit omega, found in Bartonella quintana (strain Toulouse) (Rochalimaea quintana).